The chain runs to 419 residues: G-protein coupled receptor 151 (419 aa).

The Extracellular portion of the chain corresponds to 1–41 (MLAAAFADSNSSSMNVSFAHLHFAGGYLPSDSQDWRTIIPA). 2 N-linked (GlcNAc...) asparagine glycosylation sites follow: Asn-10 and Asn-15. Residues 42–62 (LLVAVCLVGFVGNLCVIGILL) form a helical membrane-spanning segment. The Cytoplasmic portion of the chain corresponds to 63-71 (HNAWKGKPS). Residues 72–92 (MIHSLILNLSLADLSLLLFSA) form a helical membrane-spanning segment. Over 93–116 (PIRATAYSKSVWDLGWFVCKSSDW) the chain is Extracellular. A disulfide bridge links Cys-111 with Cys-187. A helical transmembrane segment spans residues 117–137 (FIHTCMAAKSLTIVVVAKVCF). Residues 138 to 153 (MYASDPAKQVSIHNYT) lie on the Cytoplasmic side of the membrane. A helical transmembrane segment spans residues 154–174 (IWSVLVAIWTVASLLPLPEWF). At 175–201 (FSTIRHHEGVEMCLVDVPAVAEEFMSM) the chain is on the extracellular side. A helical transmembrane segment spans residues 202-222 (FGKLYPLLAFGLPLFFASFYF). Topologically, residues 223–252 (WRAYDQCKKRGTKTQNLRNQIRSKQVTVML) are cytoplasmic. The chain crosses the membrane as a helical span at residues 253–273 (LSIAIISALLWLPEWVAWLWV). The Extracellular segment spans residues 274-286 (WHLKAAGPAPPQG). Residues 287 to 307 (FIALSQVLMFSISSANPLIFL) traverse the membrane as a helical segment. Residues 308–419 (VMSEEFREGL…EDQETGEGVK (112 aa)) are Cytoplasmic-facing. The interval 330–419 (PTVSESQETP…EDQETGEGVK (90 aa)) is disordered. The span at 332 to 341 (VSESQETPAG) shows a compositional bias: polar residues. Acidic residues predominate over residues 410-419 (EDQETGEGVK).

Belongs to the G-protein coupled receptor 1 family. High expression in the spinal cord.

Its subcellular location is the cell membrane. Proton-sensing G-protein coupled receptor. The sequence is that of G-protein coupled receptor 151 (GPR151) from Homo sapiens (Human).